The chain runs to 333 residues: G-protein coupled receptor 146 (333 aa).

The Extracellular segment spans residues 1–21; that stretch reads MWSCEDLNYTNSGEEQYLCNE. N-linked (GlcNAc...) asparagine glycosylation occurs at N8. Residues 22-42 form a helical membrane-spanning segment; the sequence is FHLFLFIFSVLYLIICFPVGL. The Cytoplasmic portion of the chain corresponds to 43-65; that stretch reads CYNVQLVLVNLYNKATMTMPDVY. A helical transmembrane segment spans residues 66–86; sequence FVNMAIAGLIINAVAPVYLFG. At 87 to 102 the chain is on the extracellular side; sequence PAYTKWSLWSFGNEVY. The helical transmembrane segment at 103–123 threads the bilayer; it reads ITLLILFNVSSLVIMYSTTLL. Residues 124–146 lie on the Cytoplasmic side of the membrane; it reads SLDYYIECALPRTYMSSVYNTKH. A helical transmembrane segment spans residues 147-167; it reads VCGFIWGGAVLTSFSSLLFYI. The Extracellular segment spans residues 168-189; that stretch reads CNHVSTKIIECSKMQNREAADA. A helical membrane pass occupies residues 190 to 210; the sequence is IMVLIGYVVPIIAVIYALVLI. The Cytoplasmic segment spans residues 211-234; the sequence is LQIRKEATPLDQESGRLDPSVHRL. The helical transmembrane segment at 235-255 threads the bilayer; the sequence is LIATVCTQFILWTPYYVTLLV. At 256–275 the chain is on the extracellular side; sequence NTFMDARVKSSNTFYIRIFQ. A helical transmembrane segment spans residues 276 to 296; sequence FTEGLSNFLAFSSSFVLPLIH. The Cytoplasmic segment spans residues 297 to 333; sequence RHINKNFSGKLQRLLKRLHCGSQGCTHEHTVVQQVMT.

This sequence belongs to the G-protein coupled receptor 1 family.

It is found in the cell membrane. In terms of biological role, G-protein coupled receptor required for the regulation of plasma cholesterol levels. This chain is G-protein coupled receptor 146 (gpr146), found in Xenopus laevis (African clawed frog).